A 252-amino-acid polypeptide reads, in one-letter code: 3-dehydroquinate dehydratase (252 aa).

Residues 46–48 and arginine 82 contribute to the 3-dehydroquinate site; that span reads EWR. Histidine 143 (proton donor/acceptor) is an active-site residue. Lysine 170 (schiff-base intermediate with substrate) is an active-site residue. Positions 212, 231, and 235 each coordinate 3-dehydroquinate.

It belongs to the type-I 3-dehydroquinase family. In terms of assembly, homodimer.

The catalysed reaction is 3-dehydroquinate = 3-dehydroshikimate + H2O. It functions in the pathway metabolic intermediate biosynthesis; chorismate biosynthesis; chorismate from D-erythrose 4-phosphate and phosphoenolpyruvate: step 3/7. Functionally, involved in the third step of the chorismate pathway, which leads to the biosynthesis of aromatic amino acids. Catalyzes the cis-dehydration of 3-dehydroquinate (DHQ) and introduces the first double bond of the aromatic ring to yield 3-dehydroshikimate. In Listeria innocua serovar 6a (strain ATCC BAA-680 / CLIP 11262), this protein is 3-dehydroquinate dehydratase.